The following is a 298-amino-acid chain: Homoserine kinase (298 aa).

83-93 (PVSRGLGSSST) serves as a coordination point for ATP.

This sequence belongs to the GHMP kinase family. Homoserine kinase subfamily.

Its subcellular location is the cytoplasm. It catalyses the reaction L-homoserine + ATP = O-phospho-L-homoserine + ADP + H(+). It functions in the pathway amino-acid biosynthesis; L-threonine biosynthesis; L-threonine from L-aspartate: step 4/5. Its function is as follows. Catalyzes the ATP-dependent phosphorylation of L-homoserine to L-homoserine phosphate. This Clostridium beijerinckii (strain ATCC 51743 / NCIMB 8052) (Clostridium acetobutylicum) protein is Homoserine kinase.